A 282-amino-acid chain; its full sequence is Acetyl-coenzyme A carboxylase carboxyl transferase subunit beta (282 aa).

Positions Gly-26–His-282 constitute a CoA carboxyltransferase N-terminal domain.

It belongs to the AccD/PCCB family. As to quaternary structure, acetyl-CoA carboxylase is a heterohexamer composed of biotin carboxyl carrier protein (AccB), biotin carboxylase (AccC) and two subunits each of ACCase subunit alpha (AccA) and ACCase subunit beta (AccD).

It localises to the cytoplasm. The catalysed reaction is N(6)-carboxybiotinyl-L-lysyl-[protein] + acetyl-CoA = N(6)-biotinyl-L-lysyl-[protein] + malonyl-CoA. The protein operates within lipid metabolism; malonyl-CoA biosynthesis; malonyl-CoA from acetyl-CoA: step 1/1. In terms of biological role, component of the acetyl coenzyme A carboxylase (ACC) complex. Biotin carboxylase (BC) catalyzes the carboxylation of biotin on its carrier protein (BCCP) and then the CO(2) group is transferred by the transcarboxylase to acetyl-CoA to form malonyl-CoA. The chain is Acetyl-coenzyme A carboxylase carboxyl transferase subunit beta from Flavobacteriaceae bacterium (strain 3519-10).